The primary structure comprises 418 residues: AP-3 complex subunit mu-2 (418 aa).

The region spanning 176–417 (NNEAYFDVVE…MTKAGKFQVR (242 aa)) is the MHD domain.

It belongs to the adaptor complexes medium subunit family. In terms of assembly, adaptor protein complex 3 (AP-3) is a heterotetramer composed of two large adaptins (delta-type subunit AP3D1 and beta-type subunit AP3B1 or AP3B2), a medium adaptin (mu-type subunit AP3M1 or AP3M2) and a small adaptin (sigma-type subunit APS1 or AP3S2). AP-3 associates with the BLOC-1 complex.

It is found in the golgi apparatus. Its subcellular location is the cytoplasmic vesicle membrane. In terms of biological role, component of the adaptor complexes which link clathrin to receptors in coated vesicles. Clathrin-associated protein complexes are believed to interact with the cytoplasmic tails of membrane proteins, leading to their selection and concentration. Ap47 is a subunit of the plasma membrane adaptor. In concert with the BLOC-1 complex, AP-3 is required to target cargos into vesicles assembled at cell bodies for delivery into neurites and nerve terminals. This chain is AP-3 complex subunit mu-2 (Ap3m2), found in Mus musculus (Mouse).